The chain runs to 507 residues: Monocarboxylate transporter 9 (507 aa).

Residues 1–12 (MVYRKPPDGGWG) are Extracellular-facing. A helical transmembrane segment spans residues 13–33 (WVIVIVSFFTQFLCYGSPLAV). Topologically, residues 34 to 52 (GVLYLEWLDAFGEGKGKTA) are cytoplasmic. The chain crosses the membrane as a helical span at residues 53-73 (WVGSLANGIGLLASPVCSICV). Residues 74-79 (SSFGAR) are Extracellular-facing. The helical transmembrane segment at 80 to 100 (PVAIFSGFMVAGGLMMSSFAP) threads the bilayer. Residues 101-102 (NI) lie on the Cytoplasmic side of the membrane. A helical transmembrane segment spans residues 103 to 123 (YFLYLSYGIVVGLGCGLLYNA). Residues 124 to 136 (TVTITCQYFDKRR) are Extracellular-facing. Residues 137-157 (GLALGLISTGSSVGLFIYAAL) traverse the membrane as a helical segment. The Cytoplasmic segment spans residues 158–163 (QRELIE). The chain crosses the membrane as a helical span at residues 164 to 184 (LYGLDGCLLIVGALSLNILAC). The Extracellular segment spans residues 185-302 (GSLMRPLESS…EETVVLFKNR (118 aa)). A helical transmembrane segment spans residues 303–323 (VFSALFFAILLFDIGGFPPSL). Residues 324 to 340 (LMEDIARSANINEEDYH) lie on the Cytoplasmic side of the membrane. A helical transmembrane segment spans residues 341 to 361 (MPLVSIIGIMTAIGKLILGIL). Residues 362 to 369 (ADFKWVNT) are Extracellular-facing. The chain crosses the membrane as a helical span at residues 370–390 (LYLYVLTLLMMGAALLAIPFA). Topologically, residues 391-395 (RSYFT) are cytoplasmic. The helical transmembrane segment at 396–416 (LAVLSGILGFLTGNWSIFPYV) threads the bilayer. Topologically, residues 417–430 (TTKTVGIEKLTHAY) are extracellular. The helical transmembrane segment at 431–451 (GILMFFAGLGNSLGPPIVGWF) threads the bilayer. Residues 452-460 (YDWTQEYDT) lie on the Cytoplasmic side of the membrane. Residues 461–481 (AFYFSGFCVLLGGFLLLLAAL) form a helical membrane-spanning segment. Over 482–507 (PCWNACTDRSSKLPPNTYSYKVASSA) the chain is Extracellular.

Belongs to the major facilitator superfamily. Monocarboxylate porter (TC 2.A.1.13) family.

It is found in the cell membrane. It carries out the reaction creatine(in) = creatine(out). The catalysed reaction is (R)-carnitine(in) = (R)-carnitine(out). Its function is as follows. Extracellular pH-and Na(+)-sensitive low-affinity creatine transporter. Also functions as a pH-independent carnitine efflux transporter. The chain is Monocarboxylate transporter 9 (SLC16A9) from Gallus gallus (Chicken).